We begin with the raw amino-acid sequence, 554 residues long: Eukaryotic translation initiation factor 3 subunit D-2 (554 aa).

The tract at residues 116–149 is disordered; sequence RGNAAIGGGQGGAGGTGGAGVGNKYGKGRDMRRG. Positions 120-140 are enriched in gly residues; that stretch reads AIGGGQGGAGGTGGAGVGNKY. The segment at 291 to 305 is RNA gate; it reads QFDLLTVNETALEPP. The tract at residues 532–554 is disordered; it reads FDSDGNDDEETSDDRPFLKSLGN.

The protein belongs to the eIF-3 subunit D family. As to quaternary structure, component of the eukaryotic translation initiation factor 3 (eIF-3) complex. The eIF-3 complex interacts with pix.

It localises to the cytoplasm. MRNA cap-binding component of the eukaryotic translation initiation factor 3 (eIF-3) complex, which is involved in protein synthesis of a specialized repertoire of mRNAs and, together with other initiation factors, stimulates binding of mRNA and methionyl-tRNAi to the 40S ribosome. The eIF-3 complex specifically targets and initiates translation of a subset of mRNAs involved in cell proliferation. In the eIF-3 complex, eif3d specifically recognizes and binds the 7-methylguanosine cap of a subset of mRNAs. This Drosophila virilis (Fruit fly) protein is Eukaryotic translation initiation factor 3 subunit D-2.